Consider the following 505-residue polypeptide: Flagellin (505 aa).

This sequence belongs to the bacterial flagellin family.

The protein resides in the secreted. It localises to the bacterial flagellum. In terms of biological role, flagellin is the subunit protein which polymerizes to form the filaments of bacterial flagella. This is Flagellin (fliC) from Salmonella rostock.